Consider the following 488-residue polypeptide: Metalloreductase STEAP3 (488 aa).

Topologically, residues 1 to 207 (MSGEMDKPLI…AREVEAIPLR (207 aa)) are cytoplasmic. Phosphoserine is present on residues Ser11, Ser17, and Ser20. NADP(+) contacts are provided by residues 36 to 39 (SGDF), 58 to 59 (SR), 91 to 98 (VFREHYSS), Asn116, and Ala151. FAD contacts are provided by Trp152 and Asp160. Residues 208-228 (LLPSWKVPTLLALGLFVCFYA) traverse the membrane as a helical segment. Tyr229 serves as a coordination point for Fe(3+). Topologically, residues 229–258 (YNFIRDVLQPYIRKDENKFYKMPLSVVNTT) are vesicular. An N-linked (GlcNAc...) asparagine glycan is attached at Asn256. A helical membrane pass occupies residues 259 to 279 (LPCVAYVLLSLVYLPGVLAAA). The Ferric oxidoreductase domain maps to 259–407 (LPCVAYVLLS…LGFVALMLST (149 aa)). The Cytoplasmic portion of the chain corresponds to 280–304 (LQLRRGTKYQRFPDWLDHWLQHRKQ). Residues Gln281, Arg302, and Lys303 each coordinate FAD. A helical membrane pass occupies residues 305–325 (IGLLSFFFAMLHALYSFCLPL). Residue His316 participates in heme b binding. A Fe(3+)-binding site is contributed by Tyr319. The Vesicular segment spans residues 326–358 (RRSHRYDLVNLAVKQVLANKSRLWVEEEVWRME). A helical membrane pass occupies residues 359–379 (IYLSLGVLALGMLSLLAVTSI). Ser378 serves as a coordination point for FAD. The Cytoplasmic segment spans residues 380–390 (PSIANSLNWKE). A helical transmembrane segment spans residues 391–411 (FSFVQSTLGFVALMLSTMHTL). Gln395 lines the FAD pocket. His409 lines the heme b pocket. Topologically, residues 412-433 (TYGWTRAFEENHYKFYLPPTFT) are vesicular. A helical transmembrane segment spans residues 434 to 454 (LTLLLPCVIILAKGLFLLPCL). Residues 455–488 (SHRLTKIRRGWERDGAVKFMLPAGHTQGEKTSHV) lie on the Cytoplasmic side of the membrane. Ser486 carries the phosphoserine modification.

Belongs to the STEAP family. Homodimer. Interacts with BNIP3L, MYT1, RHBDL4/RHBDD1 and TCTP. Requires FAD as cofactor. Heme b is required as a cofactor. In terms of processing, proteolytically cleaved by RHBDL4/RHBDD1. RHBDL4/RHBDD1-induced cleavage occurs at multiple sites in a glycosylation-independent manner. Post-translationally, glycosylated.

It is found in the endosome membrane. It carries out the reaction 2 Fe(2+) + NADP(+) + H(+) = 2 Fe(3+) + NADPH. It catalyses the reaction 2 Cu(+) + NADP(+) + H(+) = 2 Cu(2+) + NADPH. Functionally, integral membrane protein that functions as a NADPH-dependent ferric-chelate reductase, using NADPH from one side of the membrane to reduce a Fe(3+) chelate that is bound on the other side of the membrane. Mediates sequential transmembrane electron transfer from NADPH to FAD and onto heme, and finally to the Fe(3+) chelate. Can also reduce Cu(2+) to Cu(1+). Mediates efficient transferrin-dependent iron uptake in erythroid cells. May play a role downstream of p53/TP53 to interface apoptosis and cell cycle progression. Indirectly involved in exosome secretion by facilitating the secretion of proteins such as TCTP. This Rattus norvegicus (Rat) protein is Metalloreductase STEAP3 (Steap3).